The sequence spans 317 residues: Sulfate adenylyltransferase subunit 2 (317 aa).

Residues 1–10 (MSNAVHETDS) are compositionally biased toward basic and acidic residues. Disordered stretches follow at residues 1–21 (MSNAVHETDSKNTVASKPPLD) and 298–317 (RAIDRDQSGSMEKKKREGYF).

The protein belongs to the PAPS reductase family. CysD subfamily. In terms of assembly, heterodimer composed of CysD, the smaller subunit, and CysN.

It catalyses the reaction sulfate + ATP + H(+) = adenosine 5'-phosphosulfate + diphosphate. It participates in sulfur metabolism; hydrogen sulfide biosynthesis; sulfite from sulfate: step 1/3. Functionally, with CysN forms the ATP sulfurylase (ATPS) that catalyzes the adenylation of sulfate producing adenosine 5'-phosphosulfate (APS) and diphosphate, the first enzymatic step in sulfur assimilation pathway. APS synthesis involves the formation of a high-energy phosphoric-sulfuric acid anhydride bond driven by GTP hydrolysis by CysN coupled to ATP hydrolysis by CysD. The chain is Sulfate adenylyltransferase subunit 2 from Agrobacterium fabrum (strain C58 / ATCC 33970) (Agrobacterium tumefaciens (strain C58)).